Here is a 484-residue protein sequence, read N- to C-terminus: Probable efflux pump outer membrane protein TtgC (484 aa).

The signal sequence occupies residues 1 to 17 (MTKSLLSLAVTAFILGG). The N-palmitoyl cysteine moiety is linked to residue cysteine 18. Cysteine 18 carries S-diacylglycerol cysteine lipidation.

Belongs to the outer membrane factor (OMF) (TC 1.B.17) family.

The protein localises to the cell outer membrane. Its function is as follows. Probable outer membrane component of the TtgABC efflux pump with unknown specificity. This Pseudomonas putida (strain ATCC 47054 / DSM 6125 / CFBP 8728 / NCIMB 11950 / KT2440) protein is Probable efflux pump outer membrane protein TtgC (ttgC).